Consider the following 427-residue polypeptide: Serine hydroxymethyltransferase (427 aa).

(6S)-5,6,7,8-tetrahydrofolate-binding positions include L122 and 126–128 (GHL). Residue K231 is modified to N6-(pyridoxal phosphate)lysine. Residues E247 and 355–357 (SPF) contribute to the (6S)-5,6,7,8-tetrahydrofolate site.

It belongs to the SHMT family. Homodimer. The cofactor is pyridoxal 5'-phosphate.

The protein localises to the cytoplasm. It catalyses the reaction (6R)-5,10-methylene-5,6,7,8-tetrahydrofolate + glycine + H2O = (6S)-5,6,7,8-tetrahydrofolate + L-serine. Its pathway is one-carbon metabolism; tetrahydrofolate interconversion. The protein operates within amino-acid biosynthesis; glycine biosynthesis; glycine from L-serine: step 1/1. In terms of biological role, catalyzes the reversible interconversion of serine and glycine with tetrahydrofolate (THF) serving as the one-carbon carrier. This reaction serves as the major source of one-carbon groups required for the biosynthesis of purines, thymidylate, methionine, and other important biomolecules. Also exhibits THF-independent aldolase activity toward beta-hydroxyamino acids, producing glycine and aldehydes, via a retro-aldol mechanism. The polypeptide is Serine hydroxymethyltransferase (Microcystis aeruginosa (strain NIES-843 / IAM M-2473)).